We begin with the raw amino-acid sequence, 170 residues long: uncharacterized protein (170 aa).

Its subcellular location is the mitochondrion. This is an uncharacterized protein from Arabidopsis thaliana (Mouse-ear cress).